The following is a 466-amino-acid chain: Soluble pyridine nucleotide transhydrogenase (466 aa).

Glu36–Cys45 contributes to the FAD binding site.

The protein belongs to the class-I pyridine nucleotide-disulfide oxidoreductase family. Requires FAD as cofactor.

Its subcellular location is the cytoplasm. It catalyses the reaction NAD(+) + NADPH = NADH + NADP(+). In terms of biological role, conversion of NADPH, generated by peripheral catabolic pathways, to NADH, which can enter the respiratory chain for energy generation. This chain is Soluble pyridine nucleotide transhydrogenase, found in Enterobacter sp. (strain 638).